The chain runs to 258 residues: Very-long-chain aldehyde decarbonylase GL1-9 (258 aa).

A run of 5 helical transmembrane segments spans residues 13–33, 63–83, 88–108, 149–169, and 175–195; these read MGTF…QLVL, GVLL…MVTS, VVVQ…MLVM, PLEG…VSGM, and VFFF…LWLP. One can recognise a Fatty acid hydroxylase domain in the interval 101-237; the sequence is FLVAMLVMDS…FSIWDRILGT (137 aa).

The protein belongs to the sterol desaturase family. In terms of assembly, homodimer.

Its subcellular location is the endoplasmic reticulum membrane. The catalysed reaction is a long-chain fatty aldehyde + 2 NADPH + O2 + H(+) = a long-chain alkane + formate + 2 NADP(+) + H2O. Functionally, aldehyde decarbonylase involved in the conversion of aldehydes to alkanes. Core component of a very-long-chain alkane synthesis complex. The sequence is that of Very-long-chain aldehyde decarbonylase GL1-9 from Oryza sativa subsp. indica (Rice).